A 124-amino-acid chain; its full sequence is Ribonuclease VapC32 (124 aa).

Residues 2–112 (ILVDTSVWIE…TRDKRLKAAC (111 aa)) form the PINc domain. Mg(2+)-binding residues include Asp5 and Asp86.

The protein belongs to the PINc/VapC protein family. Requires Mg(2+) as cofactor.

In terms of biological role, toxic component of a type II toxin-antitoxin (TA) system. An RNase. Its toxic effect is neutralized by coexpression with cognate antitoxin VapB32. The protein is Ribonuclease VapC32 of Mycobacterium tuberculosis (strain CDC 1551 / Oshkosh).